Consider the following 474-residue polypeptide: Trigger factor (474 aa).

A PPIase FKBP-type domain is found at 165–250; sequence GDRVTIDYLG…VKTVSKPDEL (86 aa). Residues 451–467 show a composition bias toward basic and acidic residues; that stretch reads VKKKTASDNKKSNEIKK. Positions 451-474 are disordered; sequence VKKKTASDNKKSNEIKKKSTMKKV.

It belongs to the FKBP-type PPIase family. Tig subfamily.

The protein localises to the cytoplasm. It carries out the reaction [protein]-peptidylproline (omega=180) = [protein]-peptidylproline (omega=0). In terms of biological role, involved in protein export. Acts as a chaperone by maintaining the newly synthesized protein in an open conformation. Functions as a peptidyl-prolyl cis-trans isomerase. The polypeptide is Trigger factor (Bartonella bacilliformis (strain ATCC 35685 / KC583 / Herrer 020/F12,63)).